The sequence spans 184 residues: UPF0397 protein SAB2561c (184 aa).

Helical transmembrane passes span 11–31 (VVAI…VVIP), 44–64 (AFLA…TGLV), 77–97 (AWWS…WIGL), 111–131 (MIYF…LIAP), and 148–168 (QGVI…TILL).

This sequence belongs to the UPF0397 family.

Its subcellular location is the cell membrane. This is UPF0397 protein SAB2561c from Staphylococcus aureus (strain bovine RF122 / ET3-1).